We begin with the raw amino-acid sequence, 483 residues long: Bifunctional protein HldE (483 aa).

Residues 1 to 327 (MDDALAHLPR…ACASSAQGEP (327 aa)) are ribokinase. 201–204 (NRKE) is a binding site for ATP. Residue aspartate 272 is part of the active site. The interval 354-483 (FTNGCFDLLH…TTNLIARMNS (130 aa)) is cytidylyltransferase.

This sequence in the N-terminal section; belongs to the carbohydrate kinase PfkB family. It in the C-terminal section; belongs to the cytidylyltransferase family. Homodimer.

It carries out the reaction D-glycero-beta-D-manno-heptose 7-phosphate + ATP = D-glycero-beta-D-manno-heptose 1,7-bisphosphate + ADP + H(+). The catalysed reaction is D-glycero-beta-D-manno-heptose 1-phosphate + ATP + H(+) = ADP-D-glycero-beta-D-manno-heptose + diphosphate. It participates in nucleotide-sugar biosynthesis; ADP-L-glycero-beta-D-manno-heptose biosynthesis; ADP-L-glycero-beta-D-manno-heptose from D-glycero-beta-D-manno-heptose 7-phosphate: step 1/4. Its pathway is nucleotide-sugar biosynthesis; ADP-L-glycero-beta-D-manno-heptose biosynthesis; ADP-L-glycero-beta-D-manno-heptose from D-glycero-beta-D-manno-heptose 7-phosphate: step 3/4. Functionally, catalyzes the phosphorylation of D-glycero-D-manno-heptose 7-phosphate at the C-1 position to selectively form D-glycero-beta-D-manno-heptose-1,7-bisphosphate. Catalyzes the ADP transfer from ATP to D-glycero-beta-D-manno-heptose 1-phosphate, yielding ADP-D-glycero-beta-D-manno-heptose. The chain is Bifunctional protein HldE from Caulobacter vibrioides (strain ATCC 19089 / CIP 103742 / CB 15) (Caulobacter crescentus).